Consider the following 336-residue polypeptide: 3-isopropylmalate dehydrogenase (336 aa).

Substrate-binding residues include Arg87, Arg97, Arg121, and Asp211. Mg(2+) contacts are provided by Asp211, Asp235, and Asp239. Residue 271 to 283 (GSAPDIAGQGIAD) coordinates NAD(+).

Belongs to the isocitrate and isopropylmalate dehydrogenases family. LeuB type 2 subfamily. Homodimer. Mg(2+) is required as a cofactor. Requires Mn(2+) as cofactor.

The protein localises to the cytoplasm. The enzyme catalyses (2R,3S)-3-isopropylmalate + NAD(+) = 4-methyl-2-oxopentanoate + CO2 + NADH. It functions in the pathway amino-acid biosynthesis; L-leucine biosynthesis; L-leucine from 3-methyl-2-oxobutanoate: step 3/4. Its function is as follows. Catalyzes the oxidation of 3-carboxy-2-hydroxy-4-methylpentanoate (3-isopropylmalate) to 3-carboxy-4-methyl-2-oxopentanoate. The product decarboxylates to 4-methyl-2 oxopentanoate. The sequence is that of 3-isopropylmalate dehydrogenase from Mycobacterium leprae (strain Br4923).